The following is a 275-amino-acid chain: Putative hydro-lyase SPO1111 (275 aa).

Belongs to the D-glutamate cyclase family.

The protein is Putative hydro-lyase SPO1111 of Ruegeria pomeroyi (strain ATCC 700808 / DSM 15171 / DSS-3) (Silicibacter pomeroyi).